The following is a 531-amino-acid chain: Transmembrane protein 266 (531 aa).

Topologically, residues 1-102 (MALAASFNMT…VFLLSASLNS (102 aa)) are cytoplasmic. A helical transmembrane segment spans residues 103 to 123 (FLVACVILVVILLTLELLIDI). At 124-129 (KLLQFS) the chain is on the extracellular side. Residues 130-150 (SAFQFAGVIHWISLVILSVFF) traverse the membrane as a helical segment. Residues 151–169 (SETVLRIVVLGIWDYIENK) are Cytoplasmic-facing. A helical transmembrane segment spans residues 170 to 190 (IEVFDGAVIILSLAPMVASTV). At 191 to 199 (ANGPRSPWD) the chain is on the extracellular side. A helical transmembrane segment spans residues 200–220 (AISLIIMLRIWRVKRVIDAYV). Topologically, residues 221–531 (LPVKLEMEMV…EQKLHRVPEA (311 aa)) are cytoplasmic. Residues 231–251 (IQQYEKAKVIQDEQLERLTQI) adopt a coiled-coil conformation. Residues 380-477 (NGTGATSESA…PAGSAQTSPE (98 aa)) are disordered. The segment covering 383–412 (GATSESASRSSVTRAQSDSSQTLGSSTDCS) has biased composition (polar residues). Residues 421–431 (EPGPSPLPLPP) show a composition bias toward pro residues.

As to quaternary structure, homodimer; disulfide-linked.

It is found in the cell membrane. Its subcellular location is the cell projection. The protein localises to the dendrite. The protein resides in the perikaryon. In terms of biological role, voltage-sensor protein present on the post-synaptic side of glutamatergic mossy fibers and granule cells in the cerebellum. Despite the presence of a voltage-sensor segment, does not form a functional ion channel and its precise role remains unclear. Undergoes both rapid and slow structural rearrangements in response to changes in voltage. Contains a zinc-binding site that can regulate the slow conformational transition. The chain is Transmembrane protein 266 from Macaca fascicularis (Crab-eating macaque).